Consider the following 497-residue polypeptide: Malonate-semialdehyde dehydrogenase (497 aa).

NAD(+) is bound by residues Phe148, Lys172, Glu175, Arg176, and Ser225. Cys280 functions as the Nucleophile in the catalytic mechanism. An NAD(+)-binding site is contributed by Glu382.

It belongs to the aldehyde dehydrogenase family.

It carries out the reaction 3-oxopropanoate + NAD(+) + CoA + H2O = hydrogencarbonate + acetyl-CoA + NADH + H(+). Functionally, involved in the degradation of beta-alanine. Likely catalyzes the NAD(+)- and CoA-dependent oxidative decarboxylation of malonate semialdehyde (3-oxopropanoate) to acetyl-CoA. This is Malonate-semialdehyde dehydrogenase from Pseudomonas aeruginosa (strain ATCC 15692 / DSM 22644 / CIP 104116 / JCM 14847 / LMG 12228 / 1C / PRS 101 / PAO1).